Here is a 392-residue protein sequence, read N- to C-terminus: MSQAKTDYYSEEKTFSAPSANSQQGTQLPSKVYNKGLKDLEDNDIEGLLSSLSIDELEDLNNDFDPDNSMLPPSQRCRDQTDKEPTGPYKRDNLLKFLEDKAKTEKDWEDVCPYTPGQKRGKVYDSDSGRNSEEPENGKMEMPIEIDLDDDEEELECALVTAPEKDLVDLAGILGMHNVLNQPQYYNALKGKTQDESTGTTFNGIMQSYVPRIVPDEPDNDTDVESCINRLREDDTDLKEVNINNMKRVSKERIRSLIEAACNSKHIEKFSLANTAISDSEARGLIELIETSPSLRVLNVESNFLTPELLARLLRSTLVTQSIVEFKADNQRQSVLGNQVEMDMMMAIEENESLLRVGISFASMEARHRVSEALERNYERVRLRRLGKDPNV.

3 disordered regions span residues 1–30, 59–90, and 118–138; these read MSQA…QLPS, DLNN…GPYK, and QKRG…PENG. Over residues 16-29 the composition is skewed to polar residues; that stretch reads SAPSANSQQGTQLP. Composition is skewed to basic and acidic residues over residues 76 to 90 and 122 to 138; these read RCRD…GPYK and KVYD…PENG.

Belongs to the tropomodulin family. In terms of assembly, binds to the N-terminus of actin.

Its subcellular location is the cytoplasm. It is found in the cytoskeleton. Its function is as follows. Acts as the pointed end capping protein which maintains the length and dynamics of the actin filament. Blocks the elongation and depolymerization of the actin filaments at the pointed end. This Caenorhabditis elegans protein is Tropomodulin (unc-94).